Reading from the N-terminus, the 873-residue chain is Zinc fingers and homeoboxes protein 1 (873 aa).

The segment at L24–N63 is disordered. T36 carries the post-translational modification Phosphothreonine. Residues S45, S47, and S48 each carry the phosphoserine modification. 2 C2H2-type zinc fingers span residues Y70 to H93 and Y102 to H125. Residue K159 forms a Glycyl lysine isopeptide (Lys-Gly) (interchain with G-Cter in SUMO2) linkage. The residue at position 202 (S202) is a Phosphoserine. The interval S202–T236 is disordered. Basic and acidic residues predominate over residues N212 to I221. Positions E223–T236 are enriched in low complexity. A required for dimerization region spans residues N272 to P432. A required for interaction with NFYA region spans residues N272–F564. The homeobox 1 DNA-binding region spans N284–E346. Residues K441, K454, K485, and K629 each participate in a glycyl lysine isopeptide (Lys-Gly) (interchain with G-Cter in SUMO2) cross-link. DNA-binding regions (homeobox) lie at residues S464 to Q526 and P569 to M630. 2 disordered regions span residues K626–K667 and S732–D770. S648 is subject to Phosphoserine. The segment at residues S660–W722 is a DNA-binding region (homeobox 4). The interval M734–N768 is required for nuclear localization. Over residues L740 to K764 the composition is skewed to basic residues. Position 774 is a phosphoserine (S774). The segment at residues K777–F832 is a DNA-binding region (homeobox 5). Residues I829–D873 are disordered. Residues L831–T857 show a composition bias toward acidic residues. The tract at residues L831–D873 is required for repressor activity. Residues H863 to D873 are compositionally biased toward basic residues.

It belongs to the ZHX family. In terms of assembly, forms homodimers. Heterodimer (via HD1 domain) with ZHX2 (via HD1 domain). Also forms a heterodimer with ZHX3 which is a prerequisite for repressor activity. Interacts with ATF7IP and NFYA. Interacts (via homeobox domains) with DNMT3B (via PWWP domain). Ubiquitously expressed. Expressed in podocytes.

The protein resides in the nucleus. Functionally, acts as a transcriptional repressor. Increases DNMT3B-mediated repressive transcriptional activity when DNMT3B is tethered to DNA. May link molecule between DNMT3B and other co-repressor proteins. The protein is Zinc fingers and homeoboxes protein 1 (ZHX1) of Homo sapiens (Human).